Here is a 263-residue protein sequence, read N- to C-terminus: Endonuclease 8 (263 aa).

The Schiff-base intermediate with DNA role is filled by Pro-2. Glu-3 serves as the catalytic Proton donor. The Proton donor; for beta-elimination activity role is filled by Lys-53. Residues Gln-70, Arg-125, and Asn-169 each coordinate DNA. Residues 229-263 (KVFHRDGEACERCGGIIEKTTLSSRPFYWCPHCQK) form an FPG-type zinc finger. The Proton donor; for delta-elimination activity role is filled by Arg-253.

This sequence belongs to the FPG family. The cofactor is Zn(2+).

It catalyses the reaction 2'-deoxyribonucleotide-(2'-deoxyribose 5'-phosphate)-2'-deoxyribonucleotide-DNA = a 3'-end 2'-deoxyribonucleotide-(2,3-dehydro-2,3-deoxyribose 5'-phosphate)-DNA + a 5'-end 5'-phospho-2'-deoxyribonucleoside-DNA + H(+). Involved in base excision repair of DNA damaged by oxidation or by mutagenic agents. Acts as a DNA glycosylase that recognizes and removes damaged bases. Has a preference for oxidized pyrimidines, such as thymine glycol, 5,6-dihydrouracil and 5,6-dihydrothymine. Has AP (apurinic/apyrimidinic) lyase activity and introduces nicks in the DNA strand. Cleaves the DNA backbone by beta-delta elimination to generate a single-strand break at the site of the removed base with both 3'- and 5'-phosphates. The chain is Endonuclease 8 from Salmonella enteritidis PT4 (strain P125109).